Reading from the N-terminus, the 840-residue chain is Phosphatidylglycerol lysyltransferase (840 aa).

Residues 1–8 (MNQEVKNK) lie on the Cytoplasmic side of the membrane. The chain crosses the membrane as a helical span at residues 9–29 (IFSILKITFATALFIFVVITL). Topologically, residues 30-52 (YRELSGINFKDTLVEFSKINRMS) are extracellular. A helical membrane pass occupies residues 53–73 (LVLLFIGGGASLVILSMYDVI). The Cytoplasmic segment spans residues 74–89 (LSRALKMDISLGKVLR). A helical transmembrane segment spans residues 90–110 (VSYIINALNAIVGFGGFIGAG). The Extracellular segment spans residues 111-128 (VRAMVYKNYTHDKKKLVH). The helical transmembrane segment at 129–149 (FISLILISMLTGLSLLSLLIV) threads the bilayer. At 150-161 (FHVFDASLILDK) the chain is on the cytoplasmic side. A helical membrane pass occupies residues 162 to 182 (ITWVRWVLYVVSFFLPLFIIY). Residues 183-200 (SMVRPPDKNNRFVGLYCT) lie on the Extracellular side of the membrane. Residues 201 to 221 (LVSCVEWLAAAVVLYFCGVIV) traverse the membrane as a helical segment. Topologically, residues 222-229 (DAHVSFMS) are cytoplasmic. A helical transmembrane segment spans residues 230–250 (FIAIFIIAALSGLVSFIPGGF). Over 251 to 271 (GAFDLVVLLGFKTLGVPEEKV) the chain is Extracellular. Residues 272-292 (LLMLLLYRFAYYFVPVIIALI) traverse the membrane as a helical segment. Over 293–337 (LSSFEFGTSAKKYIEGSKYFIPAKDVTSFLMSYQKDIIAKIPSLS) the chain is Cytoplasmic. Residues 338-358 (LAILVFFTSMIFFVNNLTIVY) form a helical membrane-spanning segment. Residues 359–369 (DALYDGNHLTY) lie on the Extracellular side of the membrane. The chain crosses the membrane as a helical span at residues 370–390 (YILLAIHTSACLLLLLNVVGI). The Cytoplasmic segment spans residues 391 to 394 (YKQS). 2 helical membrane passes run 395–415 (RRAIIFAMISILLITVATFFT) and 416–436 (YASYILITWLAIIFVLLIVAF). The Cytoplasmic segment spans residues 437–450 (RRARRLKRPVRMRN). A helical membrane pass occupies residues 451 to 471 (IVAMLLFSLFILYVNHIFIAG). The Extracellular segment spans residues 472-489 (TLYALDIYTIEMHTSVLR). The chain crosses the membrane as a helical span at residues 490-510 (YYFWLTILIIAIIIGMIAWLF). The Cytoplasmic segment spans residues 511–840 (DYQFSKVRIS…SKVMRVIRHK (330 aa)).

It belongs to the LPG synthase family.

The protein resides in the cell membrane. The enzyme catalyses L-lysyl-tRNA(Lys) + a 1,2-diacyl-sn-glycero-3-phospho-(1'-sn-glycerol) = a 1,2-diacyl-sn-glycero-3-phospho-1'-(3'-O-L-lysyl)-sn-glycerol + tRNA(Lys). Catalyzes the transfer of a lysyl group from L-lysyl-tRNA(Lys) to membrane-bound phosphatidylglycerol (PG), which produces lysylphosphatidylglycerol (LPG), a major component of the bacterial membrane with a positive net charge. LPG synthesis contributes to bacterial virulence as it is involved in the resistance mechanism against cationic antimicrobial peptides (CAMP) produces by the host's immune system (defensins, cathelicidins) and by the competing microorganisms (bacteriocins). In fact, the modification of anionic phosphatidylglycerol with positively charged L-lysine results in repulsion of the peptides. This Staphylococcus aureus (strain MSSA476) protein is Phosphatidylglycerol lysyltransferase (mprF).